The sequence spans 772 residues: Mitochondrial intermediate peptidase (772 aa).

Residues 1 to 37 (MLRTIILKAGSNASIPSLSRQNKLLRFFATAGAVSRT) constitute a mitochondrion transit peptide. His558 is a binding site for Zn(2+). Glu559 is a catalytic residue. His562 and His565 together coordinate Zn(2+).

This sequence belongs to the peptidase M3 family. The cofactor is Zn(2+).

It localises to the mitochondrion matrix. The catalysed reaction is Release of an N-terminal octapeptide as second stage of processing of some proteins imported into the mitochondrion.. With respect to regulation, stimulated by Fe(2+). In terms of biological role, cleaves proteins, imported into the mitochondrion, to their mature size. While most mitochondrial precursor proteins are processed to the mature form in one step by mitochondrial processing peptidase (MPP), the sequential cleavage by MIP of an octapeptide after initial processing by MPP is a required step for a subgroup of nuclear-encoded precursor proteins destined for the matrix or the inner membrane. Cleaves precursor proteins of respiratory components, including subunits of the electron transport chain and tricarboxylic acid cycle enzymes, and components of the mitochondrial genetic machinery, including ribosomal proteins, translation factors, and proteins required for mitochondrial DNA metabolism. The chain is Mitochondrial intermediate peptidase (OCT1) from Saccharomyces cerevisiae (strain YJM789) (Baker's yeast).